Consider the following 128-residue polypeptide: L-ectoine synthase (128 aa).

Belongs to the ectoine synthase family.

It carries out the reaction (2S)-4-acetamido-2-aminobutanoate = L-ectoine + H2O. It functions in the pathway amine and polyamine biosynthesis; ectoine biosynthesis; L-ectoine from L-aspartate 4-semialdehyde: step 3/3. In terms of biological role, catalyzes the circularization of gamma-N-acetyl-alpha,gamma-diaminobutyric acid (ADABA) to ectoine (1,4,5,6-tetrahydro-2-methyl-4-pyrimidine carboxylic acid), which is an excellent osmoprotectant. The protein is L-ectoine synthase of Virgibacillus pantothenticus.